A 259-amino-acid chain; its full sequence is UPF0246 protein Rfer_2372 (259 aa).

Belongs to the UPF0246 family.

The chain is UPF0246 protein Rfer_2372 from Albidiferax ferrireducens (strain ATCC BAA-621 / DSM 15236 / T118) (Rhodoferax ferrireducens).